The chain runs to 97 residues: Putative septation protein SpoVG (97 aa).

The protein belongs to the SpoVG family.

In terms of biological role, essential for sporulation. Interferes with or is a negative regulator of the pathway leading to asymmetric septation. The polypeptide is Putative septation protein SpoVG (Bacillus cytotoxicus (strain DSM 22905 / CIP 110041 / 391-98 / NVH 391-98)).